The sequence spans 260 residues: Myb transcription factor 42 (260 aa).

2 consecutive HTH myb-type domains span residues 9–61 (KAHT…INYL) and 62–116 (RPDL…RRKL). 2 DNA-binding regions (H-T-H motif) span residues 37–61 (WRSLPRAAGLLRCGKSCRLRWINYL) and 89–112 (WSLIAARLPGRTDNEIKNYWNTHI).

In terms of tissue distribution, mainly expressed in the aerial parts and, to a lower extent, in roots.

The protein localises to the nucleus. Transcription factor that negatively regulates the expression of caffeic acid O-methyl-transferase genes (COMTs) and of other genes involved in the biosynthesis of lignin, thus preventing lignification. The chain is Myb transcription factor 42 from Zea mays (Maize).